The primary structure comprises 263 residues: 4-hydroxy-2-oxo-heptane-1,7-dioate aldolase (263 aa).

The active-site Proton acceptor is the H45. Residue Q147 participates in substrate binding. A divalent metal cation is bound at residue E149. Substrate contacts are provided by A174 and D175. D175 contributes to the a divalent metal cation binding site.

This sequence belongs to the HpcH/HpaI aldolase family. As to quaternary structure, homohexamer; trimer of dimers. Requires a divalent metal cation as cofactor.

It catalyses the reaction 4-hydroxy-2-oxoheptanedioate = succinate semialdehyde + pyruvate. It participates in aromatic compound metabolism; 4-hydroxyphenylacetate degradation; pyruvate and succinate semialdehyde from 4-hydroxyphenylacetate: step 7/7. Catalyzes the reversible retro-aldol cleavage of 4-hydroxy-2-ketoheptane-1,7-dioate (HKHD) to pyruvate and succinic semialdehyde. This Salmonella dublin (strain CT_02021853) protein is 4-hydroxy-2-oxo-heptane-1,7-dioate aldolase.